We begin with the raw amino-acid sequence, 344 residues long: L-rhamnose-proton symporter (344 aa).

A run of 10 helical transmembrane segments spans residues 4-24 (AITM…CFYA), 38-58 (WSVG…ALLL), 68-88 (FNLS…IGNI), 101-121 (MGIG…TPII), 137-157 (TLLG…AGQL), 175-195 (LLLA…MNAA), 214-234 (LPSY…FCFI), 259-279 (ILLS…YAWG), 290-310 (MSWM…GLVL), and 321-341 (VAVL…VGLG).

The protein belongs to the L-rhamnose transporter (TC 2.A.7.6) family.

The protein localises to the cell inner membrane. It carries out the reaction L-rhamnopyranose(in) + H(+)(in) = L-rhamnopyranose(out) + H(+)(out). In terms of biological role, uptake of L-rhamnose across the cytoplasmic membrane with the concomitant transport of protons into the cell (symport system). In Salmonella gallinarum (strain 287/91 / NCTC 13346), this protein is L-rhamnose-proton symporter.